Reading from the N-terminus, the 245-residue chain is 1-(5-phosphoribosyl)-5-[(5-phosphoribosylamino)methylideneamino] imidazole-4-carboxamide isomerase (245 aa).

Asp-10 serves as the catalytic Proton acceptor. Residue Asp-129 is the Proton donor of the active site.

Belongs to the HisA/HisF family.

It is found in the cytoplasm. It carries out the reaction 1-(5-phospho-beta-D-ribosyl)-5-[(5-phospho-beta-D-ribosylamino)methylideneamino]imidazole-4-carboxamide = 5-[(5-phospho-1-deoxy-D-ribulos-1-ylimino)methylamino]-1-(5-phospho-beta-D-ribosyl)imidazole-4-carboxamide. Its pathway is amino-acid biosynthesis; L-histidine biosynthesis; L-histidine from 5-phospho-alpha-D-ribose 1-diphosphate: step 4/9. This Parafrankia sp. (strain EAN1pec) protein is 1-(5-phosphoribosyl)-5-[(5-phosphoribosylamino)methylideneamino] imidazole-4-carboxamide isomerase.